We begin with the raw amino-acid sequence, 106 residues long: Iron-sulfur cluster assembly protein CyaY (106 aa).

It belongs to the frataxin family. In terms of assembly, interacts with IscS. Certain pairs of proteins can bind simultaneously to IscS; IscS-IscU-CyaY complexes can be isolated in vitro, but (IscS-TusA-CyaY) complexes cannot.

Its function is as follows. Involved in iron-sulfur (Fe-S) cluster assembly. May act as a regulator of Fe-S biogenesis. The chain is Iron-sulfur cluster assembly protein CyaY from Escherichia coli O157:H7.